We begin with the raw amino-acid sequence, 149 residues long: MKVAIASDHGGVHIRNEIKELMDELQIEYIDMGCDCGSGSVDYPDYAFPVAEKVVSGEVDRGILICGTGIGMSISANKVKGIRCALAHDTFSAKATREHNDTNILAMGERVIGPGLAREIAKIWLTTEFTGGRHQTRIGKISDYEEKNL.

H9 provides a ligand contact to substrate. The Proton acceptor role is filled by C66. 67-72 contributes to the substrate binding site; the sequence is GTGIGM. Catalysis depends on H99, which acts as the Proton donor. R133 is a substrate binding site.

It belongs to the LacAB/RpiB family.

This is Putative sugar phosphate isomerase YwlF (ywlF) from Bacillus subtilis (strain 168).